A 1278-amino-acid polypeptide reads, in one-letter code: SMC5-SMC6 complex localization factor protein 2 (1278 aa).

4 disordered regions span residues 1-235 (MTRR…LGAR), 248-337 (EQKK…KRTE), 443-491 (RINS…FIRH), and 509-582 (EPED…KETK). The segment covering 39-50 (KRTESPGDRKQS) has biased composition (basic and acidic residues). Residues 94 to 103 (SSPKKLKPKR) are compositionally biased toward basic residues. 4 stretches are compositionally biased toward basic and acidic residues: residues 118–133 (GGKE…ESRR), 156–174 (LPKE…ERRK), 180–199 (ESNR…DSRK), and 248–258 (EQKKLRKEQME). Composition is skewed to polar residues over residues 259 to 277 (QRIN…SLKS) and 318 to 329 (SDSWELSGSKQN). Basic and acidic residues-rich tracts occupy residues 449 to 463 (KEQR…KSTK) and 469 to 489 (KARE…EKFI). Residues 519–540 (ADSAPSNAGHHSSRNSDQVHSA) are compositionally biased toward polar residues. Ser-591 carries the post-translational modification Phosphoserine. 3 disordered regions span residues 598 to 724 (PLNA…EEEE), 739 to 764 (RTPT…MKEY), and 798 to 820 (IRQG…DDGD). Residues 609–630 (PKKDKERSSSKERSGHSTESSK) show a composition bias toward basic and acidic residues. Low complexity-rich tracts occupy residues 643–654 (SNESSGKNSGGS), 666–675 (PPAALEVVPS), and 688–697 (SGNSNAGSNA). Acidic residues predominate over residues 707–724 (DSDEESLGYTLESDEEEE). Phosphoserine occurs at positions 708, 712, and 719. Residues 740-1278 (TPTTSGKPPA…QLHDFWVPDS (539 aa)) are interaction with SIMC1. The segment at 769–1271 (TYTNTLERLV…NCRPTQGQLH (503 aa)) is NSE6-like domain. The interval 807 to 1278 (PLRTGDQDST…QLHDFWVPDS (472 aa)) is required for interaction with SLF1 and RAD18.

It belongs to the FAM178 family. In terms of assembly, forms a heterodimer with SIMC1. Interacts with SLF1 (via N-terminus); this interaction links RAD18 to the SMC5-SMC6 complex. Interacts with RAD18; this interaction is increased in a SLF1-dependent manner. Interacts with SMC5 and SMC6.

It localises to the nucleus. Its subcellular location is the PML body. Plays a role in the DNA damage response (DDR) pathway by regulating postreplication repair of UV-damaged DNA and genomic stability maintenance. The SLF1-SLF2 complex acts to link RAD18 with the SMC5-SMC6 complex at replication-coupled interstrand cross-links (ICL) and DNA double-strand breaks (DSBs) sites on chromatin during DNA repair in response to stalled replication forks. Promotes the recruitment of the SMC5-SMC6 complex to DNA lesions. May play a role in SMC5-SMC6 complex recruitment for viral restriction. Forms a complex with SIMC1 and this complex is required to recruit SMC5-SMC6 complex to PML nuclear bodies and sites of viral replication. In Mus musculus (Mouse), this protein is SMC5-SMC6 complex localization factor protein 2.